Consider the following 801-residue polypeptide: Phosphatidylinositol 4-phosphate 5-kinase 1 (801 aa).

The first 21 residues, 1–21, serve as a signal peptide directing secretion; sequence MPGLHVVSFLVVLLLQLRSSG. MORN repeat units follow at residues 41–63, 64–86, 87–109, 110–132, 133–155, 156–178, 182–201, and 202–223; these read YVGS…DGAL, YDGE…SGAS, YEGD…DGSV, YKGS…NSDT, YEGF…DGNV, YIGR…NGDT, NWLN…SGAC, and YIGT…PGSK. One can recognise a PIPK domain in the interval 366–797; that stretch reads GHRSYYLMLN…RFISFLEKVF (432 aa).

In terms of tissue distribution, expressed in young seedlings, shoot and seeds, and at lower level in roots, stem and leaf.

It catalyses the reaction a 1,2-diacyl-sn-glycero-3-phospho-(1D-myo-inositol 4-phosphate) + ATP = a 1,2-diacyl-sn-glycero-3-phospho-(1D-myo-inositol-4,5-bisphosphate) + ADP + H(+). In terms of biological role, involved in flowering. May suppress floral initiation by modifying the expression of genes related to floral induction. The polypeptide is Phosphatidylinositol 4-phosphate 5-kinase 1 (PIPK1) (Oryza sativa subsp. japonica (Rice)).